A 357-amino-acid chain; its full sequence is 4-hydroxy-3-methylbut-2-en-1-yl diphosphate synthase (flavodoxin) (357 aa).

4 residues coordinate [4Fe-4S] cluster: cysteine 264, cysteine 267, cysteine 299, and glutamate 306.

The protein belongs to the IspG family. [4Fe-4S] cluster is required as a cofactor.

It catalyses the reaction (2E)-4-hydroxy-3-methylbut-2-enyl diphosphate + oxidized [flavodoxin] + H2O + 2 H(+) = 2-C-methyl-D-erythritol 2,4-cyclic diphosphate + reduced [flavodoxin]. The protein operates within isoprenoid biosynthesis; isopentenyl diphosphate biosynthesis via DXP pathway; isopentenyl diphosphate from 1-deoxy-D-xylulose 5-phosphate: step 5/6. In terms of biological role, converts 2C-methyl-D-erythritol 2,4-cyclodiphosphate (ME-2,4cPP) into 1-hydroxy-2-methyl-2-(E)-butenyl 4-diphosphate. This Campylobacter jejuni subsp. jejuni serotype O:6 (strain 81116 / NCTC 11828) protein is 4-hydroxy-3-methylbut-2-en-1-yl diphosphate synthase (flavodoxin).